Consider the following 364-residue polypeptide: Glycosyltransferase 8 domain-containing protein 1 (364 aa).

Residues 1–5 (MRRVH) are Cytoplasmic-facing. A helical; Signal-anchor for type II membrane protein transmembrane segment spans residues 6 to 26 (ITVILLAAVIFLLVLHHNILG). Residues 27–364 (LSDILKRQNS…QFSLIRRHAE (338 aa)) lie on the Lumenal side of the membrane. 3 N-linked (GlcNAc...) asparagine glycosylation sites follow: Asn-102, Asn-247, and Asn-255.

The protein belongs to the glycosyltransferase 8 family.

The protein localises to the membrane. The polypeptide is Glycosyltransferase 8 domain-containing protein 1 (glt8d1) (Xenopus laevis (African clawed frog)).